The sequence spans 304 residues: UDP-N-acetylenolpyruvoylglucosamine reductase (304 aa).

Residues 34–198 (IGGKADFLVW…LEVVFALRPG (165 aa)) enclose the FAD-binding PCMH-type domain. Arg177 is a catalytic residue. The active-site Proton donor is Ser227. The active site involves Glu297.

Belongs to the MurB family. FAD is required as a cofactor.

Its subcellular location is the cytoplasm. It carries out the reaction UDP-N-acetyl-alpha-D-muramate + NADP(+) = UDP-N-acetyl-3-O-(1-carboxyvinyl)-alpha-D-glucosamine + NADPH + H(+). Its pathway is cell wall biogenesis; peptidoglycan biosynthesis. Its function is as follows. Cell wall formation. The chain is UDP-N-acetylenolpyruvoylglucosamine reductase from Geobacillus kaustophilus (strain HTA426).